Here is a 587-residue protein sequence, read N- to C-terminus: Cyclic di-GMP phosphodiesterase PA2567 (587 aa).

The 130-residue stretch at 28–157 (DEVFEEILAA…LEHFARLVMA (130 aa)) folds into the GAF domain. In terms of domain architecture, GGDEF spans 192-327 (GALTVIAADL…GVGWARYNPP (136 aa)). An EAL domain is found at 335–587 (AFTLLTSLSQ…PEQLEDWLRR (253 aa)).

It catalyses the reaction 3',3'-c-di-GMP + H2O = 5'-phosphoguanylyl(3'-&gt;5')guanosine + H(+). Functionally, phosphodiesterase (PDE) that catalyzes the hydrolysis of cyclic diguanylate (c-di-GMP) to 5'-pGpG. This is Cyclic di-GMP phosphodiesterase PA2567 from Pseudomonas aeruginosa (strain ATCC 15692 / DSM 22644 / CIP 104116 / JCM 14847 / LMG 12228 / 1C / PRS 101 / PAO1).